A 485-amino-acid polypeptide reads, in one-letter code: Protein nucleotidyltransferase YdiU (485 aa).

Gly90, Gly92, Arg93, Lys113, Asp125, Gly126, Arg176, and Arg183 together coordinate ATP. The Proton acceptor role is filled by Asp252. The Mg(2+) site is built by Asn253 and Asp262. Asp262 lines the ATP pocket.

The protein belongs to the SELO family. Requires Mg(2+) as cofactor. Mn(2+) serves as cofactor.

The enzyme catalyses L-seryl-[protein] + ATP = 3-O-(5'-adenylyl)-L-seryl-[protein] + diphosphate. It catalyses the reaction L-threonyl-[protein] + ATP = 3-O-(5'-adenylyl)-L-threonyl-[protein] + diphosphate. The catalysed reaction is L-tyrosyl-[protein] + ATP = O-(5'-adenylyl)-L-tyrosyl-[protein] + diphosphate. It carries out the reaction L-histidyl-[protein] + UTP = N(tele)-(5'-uridylyl)-L-histidyl-[protein] + diphosphate. The enzyme catalyses L-seryl-[protein] + UTP = O-(5'-uridylyl)-L-seryl-[protein] + diphosphate. It catalyses the reaction L-tyrosyl-[protein] + UTP = O-(5'-uridylyl)-L-tyrosyl-[protein] + diphosphate. Functionally, nucleotidyltransferase involved in the post-translational modification of proteins. It can catalyze the addition of adenosine monophosphate (AMP) or uridine monophosphate (UMP) to a protein, resulting in modifications known as AMPylation and UMPylation. The polypeptide is Protein nucleotidyltransferase YdiU (Aliivibrio fischeri (strain MJ11) (Vibrio fischeri)).